The chain runs to 356 residues: MLNEGLCCGAWAMKGTLLLVSSVGLLLPGVGSCPMKCLCHPSSNSVDCSGQGLSKVPRDLPPWTVTLLLQDNRIHWLPALAFQSVSLLSTLNLSNNSLSNLAAEAFYGLPHLRVLNVTQNSLLSIESSFAHALPGLRELDLSSNSLRILPTSLGKPWENLTVFAVQQNHLLHLDRELLEAMPKVRLVLLKDNPWICDCHLLGLKLWLERFTFQGGETDGAICRLPEPWQGKALLSIPHELYQPCSLPSQDLAPSLVQQPGSAPQDAQKSHENSSGQQDPLECEAKPKPKPTNLRHAVATVVITGVVCGIVCLMMLAAAIYGCTYAAITAQYQGRPLASARKSEKMGSKELMDSSSA.

Positions 1–32 (MLNEGLCCGAWAMKGTLLLVSSVGLLLPGVGS) are cleaved as a signal peptide. Residues 33–62 (CPMKCLCHPSSNSVDCSGQGLSKVPRDLPP) enclose the LRRNT domain. The Extracellular portion of the chain corresponds to 33–299 (CPMKCLCHPS…PTNLRHAVAT (267 aa)). LRR repeat units follow at residues 63–84 (WTVT…AFQS), 87–108 (LLST…AFYG), 111–132 (HLRV…FAHA), 135–156 (GLRE…LGKP), and 159–180 (NLTV…LLEA). N-linked (GlcNAc...) asparagine glycosylation is found at Asn-92 and Asn-116. The N-linked (GlcNAc...) asparagine glycan is linked to Asn-159. One can recognise an LRRCT domain in the interval 192–246 (NPWICDCHLLGLKLWLERFTFQGGETDGAICRLPEPWQGKALLSIPHELYQPCSL). The span at 255–277 (LVQQPGSAPQDAQKSHENSSGQQ) shows a compositional bias: polar residues. Positions 255–288 (LVQQPGSAPQDAQKSHENSSGQQDPLECEAKPKP) are disordered. The chain crosses the membrane as a helical span at residues 300-320 (VVITGVVCGIVCLMMLAAAIY). The Cytoplasmic segment spans residues 321–356 (GCTYAAITAQYQGRPLASARKSEKMGSKELMDSSSA).

It localises to the membrane. The polypeptide is Leucine-rich repeat and transmembrane domain-containing protein 1 (Lrtm1) (Mus musculus (Mouse)).